The following is an 87-amino-acid chain: Large ribosomal subunit protein bL27 (87 aa).

Residues 1-23 (MAHKKGTGSTRNGRDSNAQRLGV) form a disordered region. Polar residues predominate over residues 7-19 (TGSTRNGRDSNAQ).

It belongs to the bacterial ribosomal protein bL27 family.

The polypeptide is Large ribosomal subunit protein bL27 (rpmA) (Synechocystis sp. (strain ATCC 27184 / PCC 6803 / Kazusa)).